A 147-amino-acid chain; its full sequence is MVHLTGEEKSAVTTLWGKVNVDEVGGEALGRLLVVYPWTQRFFESFGDLSSPDAVMNNPKVKAHGKKVLGAFSDGLTHLDNLKGTFAQLSELHCDKLHVDPENFRLLGNVLVCVLAHHFGKEFTPTVQAAYQKVVAGVANALAHKYH.

The residue at position 2 (valine 2) is an N-acetylvaline. In terms of domain architecture, Globin spans 3 to 147 (HLTGEEKSAV…VANALAHKYH (145 aa)). The residue at position 13 (threonine 13) is a Phosphothreonine. At serine 45 the chain carries Phosphoserine. Lysine 60 bears the N6-acetyllysine mark. Histidine 64 contributes to the heme b binding site. An N6-acetyllysine modification is found at lysine 83. Histidine 93 lines the heme b pocket. Cysteine 94 bears the S-nitrosocysteine mark. Lysine 145 is modified (N6-acetyllysine).

Belongs to the globin family. Heterotetramer of two alpha chains and two beta chains. In terms of tissue distribution, red blood cells.

Its function is as follows. Involved in oxygen transport from the lung to the various peripheral tissues. The polypeptide is Hemoglobin subunit beta (HBB) (Callimico goeldii (Goeldi's marmoset)).